The following is a 445-amino-acid chain: 6-phosphogluconate dehydrogenase, decarboxylating (445 aa).

NADP(+) is bound by residues 1–4 (AVMG), 22–24 (NRS), 63–65 (VKA), and N91. Substrate-binding positions include N91 and 117-119 (SGG). K172 acts as the Proton acceptor in catalysis. 175–176 (HN) contacts substrate. The Proton donor role is filled by E179. Substrate-binding residues include Y180, K249, R276, R434, and H440.

This sequence belongs to the 6-phosphogluconate dehydrogenase family. In terms of assembly, homodimer.

It carries out the reaction 6-phospho-D-gluconate + NADP(+) = D-ribulose 5-phosphate + CO2 + NADPH. Its pathway is carbohydrate degradation; pentose phosphate pathway; D-ribulose 5-phosphate from D-glucose 6-phosphate (oxidative stage): step 3/3. Functionally, catalyzes the oxidative decarboxylation of 6-phosphogluconate to ribulose 5-phosphate and CO(2), with concomitant reduction of NADP to NADPH. The polypeptide is 6-phosphogluconate dehydrogenase, decarboxylating (gnd) (Raoultella terrigena (Klebsiella terrigena)).